The chain runs to 340 residues: MTEAPPLPKRRVLLAQPRGYCAGVERAVDTVEKALELYGPPVYVRKQIVHNKHVVAELEAKGAIFVEEADEVPEGSIVVLSAHGVAPSVYEQARQRRLKTIDATCPLVTKVHQEARRFAEQGLEILLIGHANHEEVVGTTGEAPSSITLVDGPEEAEHVQVKDPSRVAWLSQTTLSVDETLQTVEVLRRRFPQLIDPPSDDICYATQNRQAAVKRIAAIADLVIVVGSRNSSNSARLVEVALDSGAKASYLVDDASEIDERWLDGVWTVGVTSGASVPESLVTGVLAWLAERGFDTVEEIDAERETLVFALPPELRRELKARGEPLTRSATAGDRMNADR.

A [4Fe-4S] cluster-binding site is contributed by Cys21. The (2E)-4-hydroxy-3-methylbut-2-enyl diphosphate site is built by His50 and His83. Dimethylallyl diphosphate-binding residues include His50 and His83. Residues His50 and His83 each contribute to the isopentenyl diphosphate site. Cys105 serves as a coordination point for [4Fe-4S] cluster. Position 133 (His133) interacts with (2E)-4-hydroxy-3-methylbut-2-enyl diphosphate. His133 provides a ligand contact to dimethylallyl diphosphate. Residue His133 participates in isopentenyl diphosphate binding. Glu135 functions as the Proton donor in the catalytic mechanism. Thr173 is a (2E)-4-hydroxy-3-methylbut-2-enyl diphosphate binding site. Cys203 is a binding site for [4Fe-4S] cluster. Positions 231, 232, 233, and 276 each coordinate (2E)-4-hydroxy-3-methylbut-2-enyl diphosphate. Residues Ser231, Ser232, Asn233, and Ser276 each contribute to the dimethylallyl diphosphate site. Residues Ser231, Ser232, Asn233, and Ser276 each contribute to the isopentenyl diphosphate site. A disordered region spans residues 320–340 (KARGEPLTRSATAGDRMNADR).

Belongs to the IspH family. [4Fe-4S] cluster is required as a cofactor.

The catalysed reaction is isopentenyl diphosphate + 2 oxidized [2Fe-2S]-[ferredoxin] + H2O = (2E)-4-hydroxy-3-methylbut-2-enyl diphosphate + 2 reduced [2Fe-2S]-[ferredoxin] + 2 H(+). The enzyme catalyses dimethylallyl diphosphate + 2 oxidized [2Fe-2S]-[ferredoxin] + H2O = (2E)-4-hydroxy-3-methylbut-2-enyl diphosphate + 2 reduced [2Fe-2S]-[ferredoxin] + 2 H(+). Its pathway is isoprenoid biosynthesis; dimethylallyl diphosphate biosynthesis; dimethylallyl diphosphate from (2E)-4-hydroxy-3-methylbutenyl diphosphate: step 1/1. It functions in the pathway isoprenoid biosynthesis; isopentenyl diphosphate biosynthesis via DXP pathway; isopentenyl diphosphate from 1-deoxy-D-xylulose 5-phosphate: step 6/6. Its function is as follows. Catalyzes the conversion of 1-hydroxy-2-methyl-2-(E)-butenyl 4-diphosphate (HMBPP) into a mixture of isopentenyl diphosphate (IPP) and dimethylallyl diphosphate (DMAPP). Acts in the terminal step of the DOXP/MEP pathway for isoprenoid precursor biosynthesis. The polypeptide is 4-hydroxy-3-methylbut-2-enyl diphosphate reductase (Acidothermus cellulolyticus (strain ATCC 43068 / DSM 8971 / 11B)).